The chain runs to 100 residues: Small ribosomal subunit protein uS14c (100 aa).

This sequence belongs to the universal ribosomal protein uS14 family. Part of the 30S ribosomal subunit.

It localises to the plastid. The protein resides in the chloroplast. In terms of biological role, binds 16S rRNA, required for the assembly of 30S particles. In Crucihimalaya wallichii (Rock-cress), this protein is Small ribosomal subunit protein uS14c.